Here is a 251-residue protein sequence, read N- to C-terminus: Hydroxyacylglutathione hydrolase (251 aa).

Zn(2+)-binding residues include His-53, His-55, Asp-57, His-58, His-110, Asp-127, and His-165.

The protein belongs to the metallo-beta-lactamase superfamily. Glyoxalase II family. In terms of assembly, monomer. Zn(2+) is required as a cofactor.

The enzyme catalyses an S-(2-hydroxyacyl)glutathione + H2O = a 2-hydroxy carboxylate + glutathione + H(+). It functions in the pathway secondary metabolite metabolism; methylglyoxal degradation; (R)-lactate from methylglyoxal: step 2/2. In terms of biological role, thiolesterase that catalyzes the hydrolysis of S-D-lactoyl-glutathione to form glutathione and D-lactic acid. The sequence is that of Hydroxyacylglutathione hydrolase from Salmonella paratyphi A (strain ATCC 9150 / SARB42).